A 254-amino-acid polypeptide reads, in one-letter code: MVIKLGGVLLDSEEALERLFTALVTYREKHERPLVIMHGGGCLVDDLMKKLALPVVKKNGLRVTPADQIDIITGALAGTANKTLLAWAVKHDINAVGLCLGDGNTVSVTPLDAALGHVGKAEAGSPALVQTLLAANYMPIISSIGITKDGSLMNVNADQAATALAATLGADLILLSDVSGILDGKGQRIAEMTAQKAEQLIAQGIITDGMVVKVNAALDAARSLGRPVDIASWRHADQLPALFNGVPIGTRILA.

Substrate is bound by residues 40 to 41 (GG), Arg62, and Asn154. Residues 177 to 182 (DVSGIL) and 205 to 207 (IIT) contribute to the ATP site.

The protein belongs to the acetylglutamate kinase family. ArgB subfamily. As to quaternary structure, homodimer.

The protein localises to the cytoplasm. The enzyme catalyses N-acetyl-L-glutamate + ATP = N-acetyl-L-glutamyl 5-phosphate + ADP. Its pathway is amino-acid biosynthesis; L-arginine biosynthesis; N(2)-acetyl-L-ornithine from L-glutamate: step 2/4. Catalyzes the ATP-dependent phosphorylation of N-acetyl-L-glutamate. This Yersinia enterocolitica serotype O:8 / biotype 1B (strain NCTC 13174 / 8081) protein is Acetylglutamate kinase.